Consider the following 431-residue polypeptide: Adenylosuccinate lyase (431 aa).

N(6)-(1,2-dicarboxyethyl)-AMP-binding positions include 4 to 5 (RY), 67 to 69 (RHD), and 93 to 94 (TS). H141 functions as the Proton donor/acceptor in the catalytic mechanism. Q212 contacts N(6)-(1,2-dicarboxyethyl)-AMP. The Proton donor/acceptor role is filled by S262. N(6)-(1,2-dicarboxyethyl)-AMP is bound by residues S263, 268–270 (KRN), N276, and 307–311 (SAERI).

Belongs to the lyase 1 family. Adenylosuccinate lyase subfamily. In terms of assembly, homodimer and homotetramer. Residues from neighboring subunits contribute catalytic and substrate-binding residues to each active site.

The catalysed reaction is N(6)-(1,2-dicarboxyethyl)-AMP = fumarate + AMP. The enzyme catalyses (2S)-2-[5-amino-1-(5-phospho-beta-D-ribosyl)imidazole-4-carboxamido]succinate = 5-amino-1-(5-phospho-beta-D-ribosyl)imidazole-4-carboxamide + fumarate. It participates in purine metabolism; AMP biosynthesis via de novo pathway; AMP from IMP: step 2/2. Its pathway is purine metabolism; IMP biosynthesis via de novo pathway; 5-amino-1-(5-phospho-D-ribosyl)imidazole-4-carboxamide from 5-amino-1-(5-phospho-D-ribosyl)imidazole-4-carboxylate: step 2/2. Its function is as follows. Catalyzes two reactions in de novo purine nucleotide biosynthesis. Catalyzes the breakdown of 5-aminoimidazole- (N-succinylocarboxamide) ribotide (SAICAR or 2-[5-amino-1-(5-phospho-beta-D-ribosyl)imidazole-4-carboxamido]succinate) to 5-aminoimidazole-4-carboxamide ribotide (AICAR or 5-amino-1-(5-phospho-beta-D-ribosyl)imidazole-4-carboxamide) and fumarate, and of adenylosuccinate (ADS or N(6)-(1,2-dicarboxyethyl)-AMP) to adenosine monophosphate (AMP) and fumarate. The sequence is that of Adenylosuccinate lyase (purB) from Staphylococcus haemolyticus (strain JCSC1435).